The sequence spans 497 residues: Acetyl-coenzyme A carboxylase carboxyl transferase subunit beta (497 aa).

A CoA carboxyltransferase N-terminal domain is found at 217 to 489 (LWLQCDNCYG…NQNSNQYSQY (273 aa)). Positions 221, 224, 240, and 243 each coordinate Zn(2+). The C4-type zinc-finger motif lies at 221 to 243 (CDNCYGLNYKKVLKSKMTICEQC).

This sequence belongs to the AccD/PCCB family. In terms of assembly, acetyl-CoA carboxylase is a heterohexamer composed of biotin carboxyl carrier protein, biotin carboxylase and 2 subunits each of ACCase subunit alpha and ACCase plastid-coded subunit beta (accD). It depends on Zn(2+) as a cofactor.

It is found in the plastid. The enzyme catalyses N(6)-carboxybiotinyl-L-lysyl-[protein] + acetyl-CoA = N(6)-biotinyl-L-lysyl-[protein] + malonyl-CoA. It functions in the pathway lipid metabolism; malonyl-CoA biosynthesis; malonyl-CoA from acetyl-CoA: step 1/1. Functionally, component of the acetyl coenzyme A carboxylase (ACC) complex. Biotin carboxylase (BC) catalyzes the carboxylation of biotin on its carrier protein (BCCP) and then the CO(2) group is transferred by the transcarboxylase to acetyl-CoA to form malonyl-CoA. In Cuscuta reflexa (Southern Asian dodder), this protein is Acetyl-coenzyme A carboxylase carboxyl transferase subunit beta.